We begin with the raw amino-acid sequence, 520 residues long: Glutamate--cysteine ligase (520 aa).

It belongs to the glutamate--cysteine ligase type 1 family. Type 1 subfamily.

It carries out the reaction L-cysteine + L-glutamate + ATP = gamma-L-glutamyl-L-cysteine + ADP + phosphate + H(+). Its pathway is sulfur metabolism; glutathione biosynthesis; glutathione from L-cysteine and L-glutamate: step 1/2. The polypeptide is Glutamate--cysteine ligase (Serratia proteamaculans (strain 568)).